Here is a 1036-residue protein sequence, read N- to C-terminus: uncharacterized protein (1036 aa).

Positions 1–24 (MKRVGLIGVIMAALLVISATPVMA) are cleaved as a signal peptide. A helical transmembrane segment spans residues 1011–1033 (GGGVPGFEAVFAIAGLLAVAYLL).

The protein resides in the membrane. This is an uncharacterized protein from Archaeoglobus fulgidus (strain ATCC 49558 / DSM 4304 / JCM 9628 / NBRC 100126 / VC-16).